The following is a 101-amino-acid chain: Protein S100-A3 (101 aa).

EF-hand domains follow at residues 12-47 (IVCT…TWTP) and 50-85 (FREC…LCLY). Position 26 (Lys-26) interacts with Ca(2+). Residues Cys-30 and Cys-68 are joined by a disulfide bond. Residue Arg-51 is modified to Citrulline; by PAD3. Residues Asp-63, Asn-65, Asp-67, Glu-69, and Glu-74 each contribute to the Ca(2+) site. Positions 83, 86, 87, and 93 each coordinate Zn(2+).

Belongs to the S-100 family. In terms of assembly, homodimer and homotetramer for the citrullinated form. Post-translationally, more than half of the arginine residues undergo citrullination by PAD1 and PAD2. Arg-51 is specifically citrullinated by PAD3 and promotes tetramerization. In terms of tissue distribution, skin specific, specifically expressed in cuticle of pelage follicle.

The protein localises to the cytoplasm. Functionally, binds both calcium and zinc. May be involved in calcium-dependent cuticle cell differentiation, hair shaft and hair cuticular barrier formation. This chain is Protein S100-A3 (S100a3), found in Mus musculus (Mouse).